Reading from the N-terminus, the 445-residue chain is Tubulin beta chain (445 aa).

The short motif at 1–4 (MREI) is the MREI motif element. Residue glutamine 11 coordinates GTP. Serine 40 carries the post-translational modification Phosphoserine. Lysine 58 bears the N6-acetyllysine; alternate mark. Position 58 is an N6-succinyllysine; alternate (lysine 58). Residue lysine 58 forms a Glycyl lysine isopeptide (Lys-Gly) (interchain with G-Cter in ubiquitin); alternate linkage. 5 residues coordinate GTP: glutamate 69, serine 138, glycine 142, threonine 143, and glycine 144. Position 69 (glutamate 69) interacts with Mg(2+). Position 172 is a phosphoserine; by CDK1 (serine 172). GTP is bound by residues asparagine 204 and asparagine 226. Phosphothreonine occurs at positions 285 and 290. Arginine 318 bears the Omega-N-methylarginine mark. A Glycyl lysine isopeptide (Lys-Gly) (interchain with G-Cter in ubiquitin) cross-link involves residue lysine 324. A disordered region spans residues 424-445 (QYQDATADEQGEFEEEGEEDEA). Residues 429–445 (TADEQGEFEEEGEEDEA) show a composition bias toward acidic residues. At glutamate 438 the chain carries 5-glutamyl polyglutamate.

It belongs to the tubulin family. As to quaternary structure, dimer of alpha and beta chains. A typical microtubule is a hollow water-filled tube with an outer diameter of 25 nm and an inner diameter of 15 nM. Alpha-beta heterodimers associate head-to-tail to form protofilaments running lengthwise along the microtubule wall with the beta-tubulin subunit facing the microtubule plus end conferring a structural polarity. Microtubules usually have 13 protofilaments but different protofilament numbers can be found in some organisms and specialized cells. Interacts with NCKAP5L. It depends on Mg(2+) as a cofactor. Post-translationally, some glutamate residues at the C-terminus are polyglycylated, resulting in polyglycine chains on the gamma-carboxyl group. Glycylation is mainly limited to tubulin incorporated into axonemes (cilia and flagella) whereas glutamylation is prevalent in neuronal cells, centrioles, axonemes, and the mitotic spindle. Both modifications can coexist on the same protein on adjacent residues, and lowering polyglycylation levels increases polyglutamylation, and reciprocally. Cilia and flagella glycylation is required for their stability and maintenance. Flagella glycylation controls sperm motility. Some glutamate residues at the C-terminus are polyglutamylated, resulting in polyglutamate chains on the gamma-carboxyl group. Polyglutamylation plays a key role in microtubule severing by spastin (SPAST). SPAST preferentially recognizes and acts on microtubules decorated with short polyglutamate tails: severing activity by SPAST increases as the number of glutamates per tubulin rises from one to eight, but decreases beyond this glutamylation threshold. In terms of processing, phosphorylated on Ser-172 by CDK1 during the cell cycle, from metaphase to telophase, but not in interphase. This phosphorylation inhibits tubulin incorporation into microtubules.

It is found in the cytoplasm. The protein resides in the cytoskeleton. Its function is as follows. Tubulin is the major constituent of microtubules, a cylinder consisting of laterally associated linear protofilaments composed of alpha- and beta-tubulin heterodimers. Microtubules grow by the addition of GTP-tubulin dimers to the microtubule end, where a stabilizing cap forms. Below the cap, tubulin dimers are in GDP-bound state, owing to GTPase activity of alpha-tubulin. This Sus scrofa (Pig) protein is Tubulin beta chain.